Reading from the N-terminus, the 524-residue chain is Nuclear distribution protein PAC1 (524 aa).

Residues S65–G90 are a coiled coil. WD repeat units follow at residues Q121–P160, A166–T217, G220–T262, N277–L317, I353–H394, G415–S454, G463–E492, and E493–S524.

Belongs to the WD repeat LIS1/nudF family. In terms of assembly, self-associates. Interacts with NDL1 and dynein.

It is found in the cytoplasm. Its subcellular location is the cytoskeleton. It localises to the spindle pole. Positively regulates the activity of the minus-end directed microtubule motor protein dynein. Plays a central role in positioning the mitotic spindle at the bud neck during cell division. Targets cytoplasmic dynein to microtubule plus ends, thereby promoting dynein-mediated microtubule sliding along the bud cortex and consequently the movement of the mitotic spindle to the bud neck. This Scheffersomyces stipitis (strain ATCC 58785 / CBS 6054 / NBRC 10063 / NRRL Y-11545) (Yeast) protein is Nuclear distribution protein PAC1.